A 535-amino-acid chain; its full sequence is Calcium-dependent protein kinase 5 (535 aa).

Residues 1 to 46 (MGNACRGSFGGKTFQGYPQPQDHSESNSNPKHNSDSPKPKKEQQPL) form a disordered region. G2 is lipidated: N-myristoyl glycine. C5 is lipidated: S-palmitoyl cysteine. A compositionally biased stretch (basic and acidic residues) spans 32 to 43 (HNSDSPKPKKEQ). The 259-residue stretch at 72-330 (YTLGRKLGQG…AHEVLCHPWI (259 aa)) folds into the Protein kinase domain. ATP contacts are provided by residues 78 to 86 (LGQGQFGTT) and K101. The active-site Proton acceptor is the D196. The autoinhibitory domain stretch occupies residues 336–366 (APDRALDPAVLSRLKHFSAMNKLKKMALRVI). EF-hand domains follow at residues 373–408 (EEIAGLKEMFKAMDTDNSGAITFDELKAGLRKYGST), 409–444 (LKDIEIRELMDAADVDNSGTIDYGEFIAATIHLNKL), 445–480 (DREEHLMAAFQYFDKDGSGYITVDELQQACADHNIT), and 484–514 (FEDIIREVDQDNDGRIDYGEFVAMMQKGNPC). Ca(2+) contacts are provided by D386, D388, S390, E397, D422, D424, S426, T428, E433, D458, D460, S462, Y464, E469, D492, D494, D496, R498, and E503.

The protein belongs to the protein kinase superfamily. Ser/Thr protein kinase family. CDPK subfamily.

It is found in the cell membrane. The enzyme catalyses L-seryl-[protein] + ATP = O-phospho-L-seryl-[protein] + ADP + H(+). It carries out the reaction L-threonyl-[protein] + ATP = O-phospho-L-threonyl-[protein] + ADP + H(+). With respect to regulation, activated by calcium. Autophosphorylation may play an important role in the regulation of the kinase activity. Regulates the production of reactive oxygen species (ROS) by NADPH oxidase. This Solanum tuberosum (Potato) protein is Calcium-dependent protein kinase 5 (CPK5).